The chain runs to 608 residues: Mitogen-activated protein kinase kinase kinase 1 (608 aa).

Basic residues predominate over residues 1–13 (MDRILARMKKSTG). The segment at 1–20 (MDRILARMKKSTGRRGGDKN) is disordered. The interval 1-325 (MDRILARMKK…VSNTSPIYPD (325 aa)) is regulatory region. Serine 62 carries the phosphoserine modification. Residues 192–234 (MERTPTIVKSKGYLVPNNVVAVGVGVGGGIKGLRPPVLKPPPA) form a binding with MPK4 region. Disordered stretches follow at residues 228–247 (VLKPPPAMKRPPIDHRGSSW) and 256–287 (SETVKRPSSSSSSSEDGCDEEEGKEEEAEAEE). The segment covering 271–287 (DGCDEEEGKEEEAEAEE) has biased composition (acidic residues). The 255-residue stretch at 333–587 (WQKGQLLGRG…AAELLNHPFV (255 aa)) folds into the Protein kinase domain. Residues 339 to 347 (LGRGSFGSV) and lysine 361 contribute to the ATP site. The active-site Proton acceptor is aspartate 456. Serine 603 is subject to Phosphoserine.

This sequence belongs to the protein kinase superfamily. STE Ser/Thr protein kinase family. MAP kinase kinase kinase subfamily. Interacts with MKK1, MMK2 and MPK4. May form a ternary complex composed of MEKK1 and MKK1/MKK2 and MPK4. Interacts with RACK1A, RACK1B and RACK1C. Binds to CRLK1. Phosphorylated by CRLK1 in response to cold.

It localises to the cell membrane. It is found in the endosome. The catalysed reaction is L-seryl-[protein] + ATP = O-phospho-L-seryl-[protein] + ADP + H(+). It carries out the reaction L-threonyl-[protein] + ATP = O-phospho-L-threonyl-[protein] + ADP + H(+). With respect to regulation, activated by cold via CRLK1-mediated phosphorylation and leading to elevated kinase activity towards MKK2. Functionally, the MEKK1, MKK1/MKK2 and MPK4 function in a signaling pathway that modulates the expression of genes responding to biotic and abiotic stresses and also plays an important role in pathogen defense by negatively regulating innate immunity. Involved in the innate immune MAP kinase signaling cascade (MEKK1, MKK4/MKK5 and MPK3/MPK6) downstream of bacterial flagellin receptor FLS2. May be involved in the cold and salinity stress-mediated MAP kinase signaling cascade (MEKK1, MKK1/MKK2 and MPK4/MPK6). Activates by phosphorylation the downstream MKK2, MKK4 and MKK5 in a calcium-dependent manner. In Arabidopsis thaliana (Mouse-ear cress), this protein is Mitogen-activated protein kinase kinase kinase 1 (MEKK1).